We begin with the raw amino-acid sequence, 89 residues long: Large ribosomal subunit protein bL31B (89 aa).

Belongs to the bacterial ribosomal protein bL31 family. Type B subfamily. In terms of assembly, part of the 50S ribosomal subunit.

In Enterococcus faecalis (strain ATCC 700802 / V583), this protein is Large ribosomal subunit protein bL31B.